We begin with the raw amino-acid sequence, 388 residues long: Flap endonuclease 1 (388 aa).

Positions 1–104 are N-domain; it reads MGILGLSKLI…GELAKRAERR (104 aa). D34 lines the Mg(2+) pocket. 2 residues coordinate DNA: R47 and R70. Mg(2+)-binding residues include D86, E158, E160, D179, and D181. Positions 122 to 253 are I-domain; that stretch reads QIEKFNRRLV…KRAIELIKSY (132 aa). Residue E158 coordinates DNA. DNA is bound by residues G231 and D233. Position 233 (D233) interacts with Mg(2+). Positions 336-344 are interaction with PCNA; that stretch reads TQVRLDSFF. A disordered region spans residues 355–388; that stretch reads AAAKRKAEESKKSANSKKAKIGGGSGAGRGRRPK.

The protein belongs to the XPG/RAD2 endonuclease family. FEN1 subfamily. In terms of assembly, interacts with PCNA. Three molecules of FEN1 bind to one PCNA trimer with each molecule binding to one PCNA monomer. PCNA stimulates the nuclease activity without altering cleavage specificity. Mg(2+) is required as a cofactor. Phosphorylated. Phosphorylation upon DNA damage induces relocalization to the nuclear plasma.

Its subcellular location is the nucleus. It localises to the nucleolus. It is found in the nucleoplasm. The protein localises to the mitochondrion. Structure-specific nuclease with 5'-flap endonuclease and 5'-3' exonuclease activities involved in DNA replication and repair. During DNA replication, cleaves the 5'-overhanging flap structure that is generated by displacement synthesis when DNA polymerase encounters the 5'-end of a downstream Okazaki fragment. It enters the flap from the 5'-end and then tracks to cleave the flap base, leaving a nick for ligation. Also involved in the long patch base excision repair (LP-BER) pathway, by cleaving within the apurinic/apyrimidinic (AP) site-terminated flap. Acts as a genome stabilization factor that prevents flaps from equilibrating into structures that lead to duplications and deletions. Also possesses 5'-3' exonuclease activity on nicked or gapped double-stranded DNA, and exhibits RNase H activity. Also involved in replication and repair of rDNA and in repairing mitochondrial DNA. This is Flap endonuclease 1 from Drosophila grimshawi (Hawaiian fruit fly).